The primary structure comprises 251 residues: Developmental protein SEPALLATA 3 (251 aa).

The region spanning 3–57 (RGRVELKRIENKINRQVTFAKRRNGLLKKAYELSVLCDAEVALIIFSNRGKLYEF) is the MADS-box domain. Residues 91–181 (ELSSQQEYLK…RLRLADGYQM (91 aa)) enclose the K-box domain. Residues 94–177 (SQQEYLKLKE…NKTLRLRLAD (84 aa)) adopt a coiled-coil conformation.

Forms homodimers. Heterodimer with AP1 or AG capable of binding to CArG-box sequences. Binds AP3/PI to form a ternary complex. Interacts with AGL16. Interacts with TT16/AGL32.

Its subcellular location is the nucleus. Functionally, probable transcription factor active in inflorescence development and floral organogenesis. Functions with SEPALLATA1/AGL2 and SEPALLATA2/AGL4 to ensure proper development of petals, stamens and carpels and to prevent the indeterminate growth of the flower meristem. Interacts with APETALA1, AGAMOUS or APETALA3/PISTILLATA to form complexes, that could be involved in genes regulation during floral meristem development. Binds specifically to the CArG box DNA sequence 5'-CC (A/T)6 GG-3'. The chain is Developmental protein SEPALLATA 3 (SEP3) from Arabidopsis thaliana (Mouse-ear cress).